Consider the following 372-residue polypeptide: Homeobox protein Nkx-2.1 (372 aa).

Positions 161–220 form a DNA-binding region, homeobox; the sequence is RRKRRVLFSQAQVYELERRFKQQKYLSAPEREHLASMIHLTPTQVKIWFQNHRYKMKRQA. Disordered regions lie at residues 219 to 258, 269 to 288, and 312 to 340; these read QAKDKAAQQQLQQDSGGGGGGGGGAGCPQQQQAQQQSPRR, KPCQAGAPAPGAASLQSHAQ, and AGLGAHPGHQPGSAGQSPDLAHHAASPAG. A compositionally biased stretch (gly residues) spans 233-244; that stretch reads SGGGGGGGGGAG. A compositionally biased stretch (low complexity) spans 245-254; sequence CPQQQQAQQQ. At Ser-255 the chain carries Phosphoserine. A compositionally biased stretch (low complexity) spans 273 to 288; that stretch reads AGAPAPGAASLQSHAQ.

This sequence belongs to the NK-2 homeobox family. In terms of assembly, interacts with WWTR1. Post-translationally, phosphorylated on serine residues by STK3/MST2. Thyroid, lung and brain.

It is found in the nucleus. In terms of biological role, transcription factor that binds and activates the promoter of thyroid specific genes such as thyroglobulin, thyroperoxidase, and thyrotropin receptor. Crucial in the maintenance of the thyroid differentiation phenotype. May play a role in lung development and surfactant homeostasis. Forms a regulatory loop with GRHL2 that coordinates lung epithelial cell morphogenesis and differentiation. Activates the transcription of GNRHR and plays a role in enhancing the circadian oscillation of its gene expression. Represses the transcription of the circadian transcriptional repressor NR1D1. The sequence is that of Homeobox protein Nkx-2.1 from Mus musculus (Mouse).